A 756-amino-acid polypeptide reads, in one-letter code: Putative DNA ligase 052L (756 aa).

Lys-103 acts as the N6-AMP-lysine intermediate in catalysis. Positions 610 to 620 are enriched in low complexity; that stretch reads PSAAGSASPCR. The interval 610–630 is disordered; sequence PSAAGSASPCRPTKRRDDWFD. A BRCT domain is found at 648-742; sequence KKRPPMQGYV…LKRQRKCRAR (95 aa).

This sequence belongs to the NAD-dependent DNA ligase family.

It catalyses the reaction NAD(+) + (deoxyribonucleotide)n-3'-hydroxyl + 5'-phospho-(deoxyribonucleotide)m = (deoxyribonucleotide)n+m + AMP + beta-nicotinamide D-nucleotide.. Catalyzes the formation of phosphodiester linkages between 5'-phosphoryl and 3'-hydroxyl groups in double-stranded DNA using NAD as a coenzyme and as the energy source for the reaction. This Invertebrate iridescent virus 3 (IIV-3) protein is Putative DNA ligase 052L.